The primary structure comprises 411 residues: Serpin A3-5 (411 aa).

An N-terminal signal peptide occupies residues 1-24 (MRAERTSFLLALGLLMAGIRSVHC). N100, N180, N230, N264, and N318 each carry an N-linked (GlcNAc...) asparagine glycan.

It belongs to the serpin family. As to quaternary structure, homodimer.

The protein localises to the cytoplasmic vesicle. It is found in the secretory vesicle. Its subcellular location is the chromaffin granule. The protein resides in the secreted. In terms of biological role, serine protease inhibitor. This Bos taurus (Bovine) protein is Serpin A3-5.